The chain runs to 532 residues: CTP synthase (532 aa).

Residues 1 to 267 (MTKYIFVTGG…DDIVLEHLQL (267 aa)) are amidoligase domain. Residue Ser13 participates in CTP binding. Ser13 is a UTP binding site. 14-19 (SIGKGI) serves as a coordination point for ATP. An L-glutamine-binding site is contributed by Tyr54. Residue Asp71 coordinates ATP. Positions 71 and 141 each coordinate Mg(2+). Residues 148–150 (DIE), 188–193 (KTKPTQ), and Lys224 each bind CTP. UTP is bound by residues 188-193 (KTKPTQ) and Lys224. In terms of domain architecture, Glutamine amidotransferase type-1 spans 292–532 (RIGLVGKYVS…DFVGAALKNK (241 aa)). Gly354 contributes to the L-glutamine binding site. Cys381 acts as the Nucleophile; for glutamine hydrolysis in catalysis. L-glutamine contacts are provided by residues 382–385 (LGMQ), Glu405, and Arg462. Residues His507 and Glu509 contribute to the active site.

It belongs to the CTP synthase family. Homotetramer.

It carries out the reaction UTP + L-glutamine + ATP + H2O = CTP + L-glutamate + ADP + phosphate + 2 H(+). It catalyses the reaction L-glutamine + H2O = L-glutamate + NH4(+). The catalysed reaction is UTP + NH4(+) + ATP = CTP + ADP + phosphate + 2 H(+). It functions in the pathway pyrimidine metabolism; CTP biosynthesis via de novo pathway; CTP from UDP: step 2/2. Its activity is regulated as follows. Allosterically activated by GTP, when glutamine is the substrate; GTP has no effect on the reaction when ammonia is the substrate. The allosteric effector GTP functions by stabilizing the protein conformation that binds the tetrahedral intermediate(s) formed during glutamine hydrolysis. Inhibited by the product CTP, via allosteric rather than competitive inhibition. Functionally, catalyzes the ATP-dependent amination of UTP to CTP with either L-glutamine or ammonia as the source of nitrogen. Regulates intracellular CTP levels through interactions with the four ribonucleotide triphosphates. This chain is CTP synthase, found in Listeria monocytogenes serovar 1/2a (strain ATCC BAA-679 / EGD-e).